Consider the following 133-residue polypeptide: Small ribosomal subunit protein uS8 (133 aa).

This sequence belongs to the universal ribosomal protein uS8 family. As to quaternary structure, part of the 30S ribosomal subunit. Contacts proteins S5 and S12.

One of the primary rRNA binding proteins, it binds directly to 16S rRNA central domain where it helps coordinate assembly of the platform of the 30S subunit. This Nostoc punctiforme (strain ATCC 29133 / PCC 73102) protein is Small ribosomal subunit protein uS8.